The following is a 553-amino-acid chain: Pseudouridylate synthase RPUSD2 (553 aa).

A disordered region spans residues 76-135; that stretch reads AVGKQVPESGDQAQGGEGQLPSNGEQTPAPVADSGKRKKRRGATGERVVPPPKKRRTGVS. Residue Asp287 is part of the active site. At Thr490 the chain carries Phosphothreonine.

It belongs to the pseudouridine synthase RluA family.

It catalyses the reaction a uridine in mRNA = a pseudouridine in mRNA. In terms of biological role, pseudouridine synthase that catalyzes pseudouridylation of mRNAs. This Mus musculus (Mouse) protein is Pseudouridylate synthase RPUSD2.